A 208-amino-acid chain; its full sequence is Interleukin-6 (208 aa).

The first 29 residues, 1–29 (MNSLFTSAFSPLAVSLGLLLVMTSAFPTP), serve as a signal peptide directing secretion. N38 is a glycosylation site (N-linked (GlcNAc...) asparagine). The cysteines at positions 72 and 78 are disulfide-linked. S81 is modified (phosphoserine). The cysteines at positions 101 and 111 are disulfide-linked.

The protein belongs to the IL-6 superfamily. In terms of assembly, component of a hexamer of two molecules each of IL6, IL6R and IL6ST; first binds to IL6R to associate with the signaling subunit IL6ST. Interacts with IL6R (via the N-terminal ectodomain); this interaction may be affected by IL6R-binding with SORL1, hence decreasing IL6 cis signaling. Interacts with SORL1 (via the N-terminal ectodomain); this interaction leads to IL6 internalization and lysosomal degradation. May form a trimeric complex with the soluble SORL1 ectodomain and soluble IL6R receptor; this interaction might stabilize circulating IL6, hence promoting IL6 trans signaling.

The protein resides in the secreted. Functionally, cytokine with a wide variety of biological functions in immunity, tissue regeneration, and metabolism. Binds to IL6R, then the complex associates to the signaling subunit IL6ST/gp130 to trigger the intracellular IL6-signaling pathway. The interaction with the membrane-bound IL6R and IL6ST stimulates 'classic signaling', whereas the binding of IL6 and soluble IL6R to IL6ST stimulates 'trans-signaling'. Alternatively, 'cluster signaling' occurs when membrane-bound IL6:IL6R complexes on transmitter cells activate IL6ST receptors on neighboring receiver cells. Its function is as follows. IL6 is a potent inducer of the acute phase response. Rapid production of IL6 contributes to host defense during infection and tissue injury, but excessive IL6 synthesis is involved in disease pathology. In the innate immune response, is synthesized by myeloid cells, such as macrophages and dendritic cells, upon recognition of pathogens through toll-like receptors (TLRs) at the site of infection or tissue injury. In the adaptive immune response, is required for the differentiation of B cells into immunoglobulin-secreting cells. Plays a major role in the differentiation of CD4(+) T cell subsets. Essential factor for the development of T follicular helper (Tfh) cells that are required for the induction of germinal-center formation. Required to drive naive CD4(+) T cells to the Th17 lineage. Also required for proliferation of myeloma cells and the survival of plasmablast cells. Acts as an essential factor in bone homeostasis and on vessels directly or indirectly by induction of VEGF, resulting in increased angiogenesis activity and vascular permeability. Induces, through 'trans-signaling' and synergistically with IL1B and TNF, the production of VEGF. Involved in metabolic controls, is discharged into the bloodstream after muscle contraction increasing lipolysis and improving insulin resistance. 'Trans-signaling' in central nervous system also regulates energy and glucose homeostasis. Mediates, through GLP-1, crosstalk between insulin-sensitive tissues, intestinal L cells and pancreatic islets to adapt to changes in insulin demand. Also acts as a myokine. Plays a protective role during liver injury, being required for maintenance of tissue regeneration. Also has a pivotal role in iron metabolism by regulating HAMP/hepcidin expression upon inflammation or bacterial infection. Through activation of IL6ST-YAP-NOTCH pathway, induces inflammation-induced epithelial regeneration. The sequence is that of Interleukin-6 (IL6) from Capra hircus (Goat).